A 2271-amino-acid polypeptide reads, in one-letter code: Protein Ycf2 (2271 aa).

1628–1635 serves as a coordination point for ATP; the sequence is GSIGTGRS.

It belongs to the Ycf2 family.

The protein resides in the plastid. It localises to the chloroplast stroma. Its function is as follows. Probable ATPase of unknown function. Its presence in a non-photosynthetic plant (Epifagus virginiana) and experiments in tobacco indicate that it has an essential function which is probably not related to photosynthesis. In Illicium oligandrum (Star anise), this protein is Protein Ycf2.